The chain runs to 559 residues: (R)-mandelonitrile lyase 1 (559 aa).

The N-terminal stretch at 1–27 (MEKSTMSVILFVLHLLVLHLQYSEVHS) is a signal peptide. 2 N-linked (GlcNAc...) asparagine glycosylation sites follow: Asn30 and Asn44. FAD is bound by residues 63–64 (TS), 82–83 (ER), Thr133, and 137–140 (NAGV). N-linked (GlcNAc...) asparagine glycosylation is found at Asn145, Asn162, Asn178, and Asn218. Val244 lines the FAD pocket. N-linked (GlcNAc...) asparagine glycosylation is found at Asn252, Asn255, Asn309, Asn380, Asn402, Asn420, and Asn467. Cys427 and Cys478 are oxidised to a cystine. Residue Tyr485 participates in substrate binding. FAD is bound at residue 486 to 487 (WH). The active-site Proton donor is the His487. The active-site Proton acceptor is the His525. FAD is bound at residue 526–527 (PQ).

It belongs to the GMC oxidoreductase family. As to quaternary structure, monomer. FAD serves as cofactor.

It carries out the reaction (R)-mandelonitrile = benzaldehyde + hydrogen cyanide. In terms of biological role, involved in cyanogenesis, the release of HCN from injured tissues. Catalyzes the stereospecific addition of HCN to a variety of aldehydes in vitro. It is a major seed constituent, and could have the additional role of a storage form for reduced nitrogen. This Prunus dulcis (Almond) protein is (R)-mandelonitrile lyase 1 (MDL1).